Reading from the N-terminus, the 70-residue chain is uncharacterized protein (70 aa).

A helical membrane pass occupies residues 14 to 34; sequence CLVVWFACVYSLLILVVLLLI.

It is found in the virion membrane. This is an uncharacterized protein from Homo sapiens (Human).